The sequence spans 335 residues: Acetyl-coenzyme A carboxylase carboxyl transferase subunit alpha (335 aa).

In terms of domain architecture, CoA carboxyltransferase C-terminal spans Gln40–Glu294.

Belongs to the AccA family. In terms of assembly, acetyl-CoA carboxylase is a heterohexamer composed of biotin carboxyl carrier protein (AccB), biotin carboxylase (AccC) and two subunits each of ACCase subunit alpha (AccA) and ACCase subunit beta (AccD).

Its subcellular location is the cytoplasm. It carries out the reaction N(6)-carboxybiotinyl-L-lysyl-[protein] + acetyl-CoA = N(6)-biotinyl-L-lysyl-[protein] + malonyl-CoA. The protein operates within lipid metabolism; malonyl-CoA biosynthesis; malonyl-CoA from acetyl-CoA: step 1/1. Its function is as follows. Component of the acetyl coenzyme A carboxylase (ACC) complex. First, biotin carboxylase catalyzes the carboxylation of biotin on its carrier protein (BCCP) and then the CO(2) group is transferred by the carboxyltransferase to acetyl-CoA to form malonyl-CoA. The sequence is that of Acetyl-coenzyme A carboxylase carboxyl transferase subunit alpha from Prochlorococcus marinus subsp. pastoris (strain CCMP1986 / NIES-2087 / MED4).